The following is a 330-amino-acid chain: GTPase Obg (330 aa).

In terms of domain architecture, Obg spans 1–159 (MHFIDEVKIY…MWIHLSLKLL (159 aa)). The region spanning 160–327 (SDVGLVGFPN…IVKLALETIK (168 aa)) is the OBG-type G domain. Residues 166 to 173 (GFPNAGKS), 191 to 195 (FTTLV), 212 to 215 (DIPG), 279 to 282 (NKCD), and 308 to 310 (STY) contribute to the GTP site. Mg(2+) is bound by residues S173 and T193.

The protein belongs to the TRAFAC class OBG-HflX-like GTPase superfamily. OBG GTPase family. As to quaternary structure, monomer. It depends on Mg(2+) as a cofactor.

The protein resides in the cytoplasm. Functionally, an essential GTPase which binds GTP, GDP and possibly (p)ppGpp with moderate affinity, with high nucleotide exchange rates and a fairly low GTP hydrolysis rate. Plays a role in control of the cell cycle, stress response, ribosome biogenesis and in those bacteria that undergo differentiation, in morphogenesis control. The polypeptide is GTPase Obg (Rickettsia massiliae (strain Mtu5)).